We begin with the raw amino-acid sequence, 92 residues long: Beta-2-microglobulin (92 aa).

The Ig-like C1-type domain occupies 2–91; sequence PQIQVYTRHP…VSLNEPKTVI (90 aa). Cysteine 22 and cysteine 77 form a disulfide bridge.

It belongs to the beta-2-microglobulin family. As to quaternary structure, heterodimer of an alpha chain and a beta chain. Beta-2-microglobulin is the beta-chain of major histocompatibility complex class I molecules.

Its subcellular location is the secreted. Its function is as follows. Component of the class I major histocompatibility complex (MHC). Involved in the presentation of peptide antigens to the immune system. This Mus cervicolor (Fawn-colored mouse) protein is Beta-2-microglobulin (B2m).